A 78-amino-acid polypeptide reads, in one-letter code: Small ribosomal subunit protein bS18 (78 aa).

It belongs to the bacterial ribosomal protein bS18 family. Part of the 30S ribosomal subunit. Forms a tight heterodimer with protein bS6.

Functionally, binds as a heterodimer with protein bS6 to the central domain of the 16S rRNA, where it helps stabilize the platform of the 30S subunit. The polypeptide is Small ribosomal subunit protein bS18 (Lactobacillus acidophilus (strain ATCC 700396 / NCK56 / N2 / NCFM)).